The chain runs to 1284 residues: DNA topoisomerase 2, mitochondrial (1284 aa).

Residues 1-35 constitute a mitochondrion transit peptide; the sequence is MSKLLNNNNHKNLTNYLKFGKGIINNLNNKSKQVG. ATP is bound by residues Asn-183, Asn-212, 240–242, and 253–260; these read GSN and GRNGFGAK. Positions 445–447 are interaction with DNA; the sequence is KKK. Position 478-480 (478-480) interacts with ATP; sequence QSK. The Toprim domain occupies 560 to 677; that stretch reads CTLIITEGDS…NLLKRGFLVE (118 aa). Mg(2+)-binding residues include Glu-566, Asp-646, and Asp-648. The Topo IIA-type catalytic domain maps to 810–1232; sequence IPSLIDGLKP…DPKSLWTADL (423 aa). Residue Tyr-900 is the O-(5'-phospho-DNA)-tyrosine intermediate of the active site. The disordered stretch occupies residues 1245-1284; that stretch reads EFQKKPLKTSSSSSFDVSSSSESAKLSSTRKSKTDKIKSK. A compositionally biased stretch (low complexity) spans 1254-1271; the sequence is SSSSSFDVSSSSESAKLS.

Belongs to the type II topoisomerase family. As to quaternary structure, homodimer. Mg(2+) is required as a cofactor. Requires Mn(2+) as cofactor. It depends on Ca(2+) as a cofactor.

It localises to the mitochondrion. It catalyses the reaction ATP-dependent breakage, passage and rejoining of double-stranded DNA.. In terms of biological role, control of topological states of DNA by transient breakage and subsequent rejoining of DNA strands. Topoisomerase II makes double-strand breaks. This Dictyostelium discoideum (Social amoeba) protein is DNA topoisomerase 2, mitochondrial (top2mt).